Here is a 193-residue protein sequence, read N- to C-terminus: Large ribosomal subunit protein bL17m (193 aa).

The protein belongs to the bacterial ribosomal protein bL17 family. As to quaternary structure, component of the mitochondrial large ribosomal subunit (mt-LSU). Mature N.crassa 74S mitochondrial ribosomes consist of a small (37S) and a large (54S) subunit. The 37S small subunit contains a 16S ribosomal RNA (16S mt-rRNA) and 32 different proteins. The 54S large subunit contains a 23S rRNA (23S mt-rRNA) and 42 different proteins.

The protein resides in the mitochondrion. In terms of biological role, component of the mitochondrial ribosome (mitoribosome), a dedicated translation machinery responsible for the synthesis of mitochondrial genome-encoded proteins, including at least some of the essential transmembrane subunits of the mitochondrial respiratory chain. The mitoribosomes are attached to the mitochondrial inner membrane and translation products are cotranslationally integrated into the membrane. The polypeptide is Large ribosomal subunit protein bL17m (mrpl8) (Neurospora crassa (strain ATCC 24698 / 74-OR23-1A / CBS 708.71 / DSM 1257 / FGSC 987)).